The sequence spans 882 residues: Leucine--tRNA ligase (882 aa).

The short motif at P43 to H53 is the 'HIGH' region element. The short motif at K634–S638 is the 'KMSKS' region element. K637 provides a ligand contact to ATP.

It belongs to the class-I aminoacyl-tRNA synthetase family.

The protein localises to the cytoplasm. The enzyme catalyses tRNA(Leu) + L-leucine + ATP = L-leucyl-tRNA(Leu) + AMP + diphosphate. The polypeptide is Leucine--tRNA ligase (Rhodopseudomonas palustris (strain BisB18)).